The following is a 294-amino-acid chain: NAD kinase (294 aa).

The Proton acceptor role is filled by aspartate 74. NAD(+) contacts are provided by residues 74 to 75, 148 to 149, histidine 159, arginine 176, aspartate 178, 189 to 194, and glutamine 249; these read DG, NE, and TAYSLS.

Belongs to the NAD kinase family. Requires a divalent metal cation as cofactor.

The protein localises to the cytoplasm. It catalyses the reaction NAD(+) + ATP = ADP + NADP(+) + H(+). In terms of biological role, involved in the regulation of the intracellular balance of NAD and NADP, and is a key enzyme in the biosynthesis of NADP. Catalyzes specifically the phosphorylation on 2'-hydroxyl of the adenosine moiety of NAD to yield NADP. The protein is NAD kinase of Vibrio parahaemolyticus serotype O3:K6 (strain RIMD 2210633).